The primary structure comprises 402 residues: MGSVNESCDNYVEIFNKINYFFRDDQVINGTEYSPKEFGYFITFAYMLIILFGAIGNFLTIIVVILNPAMRTTRNFFILNLALSDFFVCIVTAPTTLYTVLYMFWPFSRTLCKIAGSLQGFNIFLSTFSIASIAVDRYVLIIFPTKRERQQNLSFCFFIMIWVISLILAVPLLQASDLTPVFVEPSCDLALYICHEQNEIWEKMIISKGTYTLAVLITQYAFPLFSLVFAYSRIAHRMKLRFANRNQNVTTNTNTSQRRRSVVERQRRTHLLLVCVVAVFAVAWLPLNVFHIFNTFELVNSFSVTTFSICHCLAMCSACLNPLIYAFFNHNFRIEFMHLFDRVGLRSLRVVIFGEQESLKKSMRTEFRSRGGCKTVTTAEPATFQRMNESMILSAMEQDEQL.

Residues 1 to 45 are Extracellular-facing; the sequence is MGSVNESCDNYVEIFNKINYFFRDDQVINGTEYSPKEFGYFITFA. Asparagine 5 and asparagine 29 each carry an N-linked (GlcNAc...) asparagine glycan. Residues 46-66 form a helical membrane-spanning segment; that stretch reads YMLIILFGAIGNFLTIIVVIL. Residues 67-85 are Cytoplasmic-facing; sequence NPAMRTTRNFFILNLALSD. A helical transmembrane segment spans residues 86–106; sequence FFVCIVTAPTTLYTVLYMFWP. Residues 107–122 are Extracellular-facing; sequence FSRTLCKIAGSLQGFN. An intrachain disulfide couples cysteine 112 to cysteine 194. A helical transmembrane segment spans residues 123–143; it reads IFLSTFSIASIAVDRYVLIIF. Residues 144–152 are Cytoplasmic-facing; it reads PTKRERQQN. A helical transmembrane segment spans residues 153–173; sequence LSFCFFIMIWVISLILAVPLL. At 174–210 the chain is on the extracellular side; the sequence is QASDLTPVFVEPSCDLALYICHEQNEIWEKMIISKGT. The chain crosses the membrane as a helical span at residues 211 to 231; sequence YTLAVLITQYAFPLFSLVFAY. Topologically, residues 232–272 are cytoplasmic; it reads SRIAHRMKLRFANRNQNVTTNTNTSQRRRSVVERQRRTHLL. A helical membrane pass occupies residues 273-293; it reads LVCVVAVFAVAWLPLNVFHIF. The Extracellular portion of the chain corresponds to 294–306; it reads NTFELVNSFSVTT. Residues 307 to 328 traverse the membrane as a helical segment; sequence FSICHCLAMCSACLNPLIYAFF. The Cytoplasmic portion of the chain corresponds to 329-402; the sequence is NHNFRIEFMH…LSAMEQDEQL (74 aa).

The protein belongs to the G-protein coupled receptor 1 family.

Its subcellular location is the cell membrane. In terms of biological role, could be a receptor for neuropeptide Y and peptide YY. In Caenorhabditis elegans, this protein is Putative neuropeptide Y receptor 11 (npr-11).